The primary structure comprises 142 residues: Hemoglobin subunit alpha (142 aa).

A Globin domain is found at Val-2 to Arg-142. A Phosphoserine modification is found at Ser-4. 2 positions are modified to N6-succinyllysine: Lys-8 and Lys-12. At Lys-17 the chain carries N6-acetyllysine; alternate. Position 17 is an N6-succinyllysine; alternate (Lys-17). Tyr-25 carries the phosphotyrosine modification. Ser-36 carries the phosphoserine modification. Position 41 is an N6-succinyllysine (Lys-41). Position 50 is a phosphoserine (Ser-50). O2 is bound at residue His-59. His-88 provides a ligand contact to heme b. Ser-103 is modified (phosphoserine). Thr-109 bears the Phosphothreonine mark. Residue Ser-125 is modified to Phosphoserine. 2 positions are modified to phosphothreonine: Thr-135 and Thr-138. Ser-139 carries the phosphoserine modification.

The protein belongs to the globin family. In terms of assembly, heterotetramer of two alpha chains and two beta chains. Red blood cells.

In terms of biological role, involved in oxygen transport from the lung to the various peripheral tissues. Its function is as follows. Hemopressin acts as an antagonist peptide of the cannabinoid receptor CNR1. Hemopressin-binding efficiently blocks cannabinoid receptor CNR1 and subsequent signaling. This is Hemoglobin subunit alpha (HBA) from Panthera leo (Lion).